Consider the following 361-residue polypeptide: Mitogen-activated protein kinase 14A (361 aa).

One can recognise a Protein kinase domain in the interval 25-309; it reads YQNLSPVGSG…AAEALAHPYF (285 aa). ATP is bound by residues 31–39 and Lys54; that span reads VGSGAYGSV. Catalysis depends on Asp169, which acts as the Proton acceptor. Residue Thr181 is modified to Phosphothreonine; by MAP2K3. The TXY motif lies at 181–183; the sequence is TGY. Tyr183 carries the post-translational modification Phosphotyrosine; by MAP2K3.

It belongs to the protein kinase superfamily. CMGC Ser/Thr protein kinase family. MAP kinase subfamily. Requires Mg(2+) as cofactor. Post-translationally, dually phosphorylated on Thr-181 and Tyr-183, which activates the enzyme.

It localises to the cytoplasm. The protein localises to the nucleus. It carries out the reaction L-seryl-[protein] + ATP = O-phospho-L-seryl-[protein] + ADP + H(+). The enzyme catalyses L-threonyl-[protein] + ATP = O-phospho-L-threonyl-[protein] + ADP + H(+). With respect to regulation, activated by threonine and tyrosine phosphorylation by the dual specificity kinase, MKK3. Its function is as follows. Serine/threonine kinase which acts as an essential component of the MAP kinase signal transduction pathway. Mapk14a is one of the four p38 MAPKs which play an important role in the cascades of cellular responses evoked by extracellular stimuli such as pro-inflammatory cytokines or physical stress leading to direct activation of transcription factors. Accordingly, p38 MAPKs phosphorylate a broad range of proteins and it has been estimated that they may have approximately 200 to 300 substrates each. Some of the targets are downstream kinases which are activated through phosphorylation and further phosphorylate additional targets. Required for cytokinesis on the future dorsal side of the blastodisc, suggesting a role in symmetrical and synchronous blastomere cleavage. The polypeptide is Mitogen-activated protein kinase 14A (mapk14a) (Danio rerio (Zebrafish)).